A 506-amino-acid chain; its full sequence is MGDRSEGPGPTRPGPPGIGPEGPLGQLLRRHRSPSPTRGGQEPRRVRRRVLVQQEEEVVSGSPSGPRGDRSEGPGPTRPGPPGIGPEGPLGQLLRRHRSPSPTRGGQEPRRVRRRVLVQQEEEVVSGSPSGPRGDRSEGPGPTRPGPPGIGPEGPLGQLLRRHRSPSPTRGGQEPRRVRRRVLVQQEEEVVSGSPSGPRGDRSEGPGPTRPGPPGIGPEGPLGQLLRRHRSPSPTRGGQEPRRVRRRVLVQQEEEVVSGSPSGPRGDRSEGPGPTRPGPPGIGPEGPLGQLLRRHRSPSPTRGGQEPRRVRRRVLVQQEEEVVSGSPSGPRGDRSEGPGPTRPGPPGIGPEGPLGQLLRRHRSPSPTRGGQEPRRVRRRVLVQQEEEVVSGSPSGPRGDRSEGPGPTRPGPPGIGPEGPLGQLLRRHRSPSPTRGGQEPRRVRRRVLVQQEEEVVSGSPSGPLRPRPRPPARSLREWLLRIRDHFEPPTVTTQRQSVYIEEEEDED.

Disordered stretches follow at residues 1–470 (MGDR…PRPP) and 485–506 (FEPPTVTTQRQSVYIEEEEDED). Ser-35 carries the phosphoserine; by host modification.

Belongs to the lymphocryptovirus EBNA-LP family. Homooligomer. Interacts with host SP100; this interaction is important for EBNA-LP coactivator activity. Interacts with host HAX1, ERR1 and HSPA2. Interacts with host PRKDC and AKAP8L; these interactions modulate the coactivator function of EBNA-LP. Post-translationally, phosphorylated by the cellular protein kinase cdc2.

The protein localises to the host nucleus. Its function is as follows. Plays an important role in the establishment of B-cell immortalization by acting as an EBNA2 coactivator. This transcriptional activation preferentially enhances the expression of the major viral protein LMP1. The interaction between EBNA-LP and host SP100 correlates with coactivation of EBNA2 and the relocalization of SP100 from PML nuclear bodies into nucleoplasm. The polypeptide is Epstein-Barr nuclear antigen leader protein (EBNA-LP) (Epstein-Barr virus (strain B95-8) (HHV-4)).